We begin with the raw amino-acid sequence, 552 residues long: Putative transport protein YPTS_4123 (552 aa).

6 consecutive transmembrane segments (helical) span residues 1-21 (MSAI…GLWI), 26-46 (IYGV…VGHF), 65-85 (FGLI…FFSS), 96-116 (FAIL…KLFA), 119-139 (LPII…LGAA), and 158-178 (MGYA…MWLI). RCK C-terminal domains lie at 192–276 (AFDS…VVGE) and 279–361 (DVTL…IVGN). Transmembrane regions (helical) follow at residues 371–391 (MLPV…PLFV), 393–413 (GFPA…ALIL), 439–459 (IVLF…NTLV), 464–484 (LAWI…VGIL), 493–513 (YLTL…LAFA), and 530–550 (VYPL…VLFW).

The protein belongs to the AAE transporter (TC 2.A.81) family. YidE subfamily.

Its subcellular location is the cell membrane. The chain is Putative transport protein YPTS_4123 from Yersinia pseudotuberculosis serotype IB (strain PB1/+).